The sequence spans 29 residues: Serum amyloid P-component (29 aa).

The Pentraxin (PTX) domain occupies 6–29 (LGKVFVFSKESNVDDVKLLTPQTE).

It belongs to the pentraxin family. Homopentamer. Pentraxin (or pentaxin) have a discoid arrangement of 5 non-covalently bound subunits. Requires Ca(2+) as cofactor.

The protein resides in the secreted. This chain is Serum amyloid P-component, found in Hippoglossus hippoglossus (Atlantic halibut).